Consider the following 186-residue polypeptide: Catechol O-methyltransferase (186 aa).

Residues valine 7, glutamate 29, serine 37, glutamate 55, leucine 56, 82 to 85, serine 84, and aspartate 106 each bind S-adenosyl-L-methionine; that span reads GASQ. Aspartate 106 lines the Mg(2+) pocket. Residue lysine 109 coordinates substrate. The Mg(2+) site is built by aspartate 134 and asparagine 135. Substrate-binding residues include asparagine 135 and glutamate 164. Serine 182 bears the Phosphoserine mark.

This sequence belongs to the class I-like SAM-binding methyltransferase superfamily. Cation-dependent O-methyltransferase family. The cofactor is Mg(2+).

Its subcellular location is the cytoplasm. The protein localises to the cell membrane. The enzyme catalyses a catechol + S-adenosyl-L-methionine = a guaiacol + S-adenosyl-L-homocysteine + H(+). It carries out the reaction 2-hydroxyestrone + S-adenosyl-L-methionine = 2-hydroxy-3-methoxy-estrone + S-adenosyl-L-homocysteine + H(+). The catalysed reaction is 4-hydroxyestrone + S-adenosyl-L-methionine = 4-methoxyestrone + S-adenosyl-L-homocysteine + H(+). It catalyses the reaction 2-hydroxyestrone + S-adenosyl-L-methionine = 2-methoxyestrone + S-adenosyl-L-homocysteine + H(+). The enzyme catalyses 4-hydroxy-17beta-estradiol + S-adenosyl-L-methionine = 4-methoxy-17beta-estradiol + S-adenosyl-L-homocysteine + H(+). It carries out the reaction 2-hydroxy-17beta-estradiol + S-adenosyl-L-methionine = 2-hydroxy-3-methoxy-17beta-estradiol + S-adenosyl-L-homocysteine + H(+). The catalysed reaction is 2-hydroxy-17beta-estradiol + S-adenosyl-L-methionine = 2-methoxy-17beta-estradiol + S-adenosyl-L-homocysteine + H(+). In terms of biological role, catalyzes the O-methylation, and thereby the inactivation, of catecholamine neurotransmitters and catechol hormones. Also shortens the biological half-lives of certain neuroactive drugs, like L-DOPA, alpha-methyl DOPA and isoproterenol. The sequence is that of Catechol O-methyltransferase (COMT) from Sus scrofa (Pig).